The following is a 120-amino-acid chain: UPF0231 protein NT01EI_0766 (120 aa).

The protein belongs to the UPF0231 family.

The polypeptide is UPF0231 protein NT01EI_0766 (Edwardsiella ictaluri (strain 93-146)).